We begin with the raw amino-acid sequence, 170 residues long: Acireductone dioxygenase (170 aa).

His-99, His-101, Glu-105, and His-144 together coordinate Fe(2+). Residues His-99, His-101, Glu-105, and His-144 each coordinate Ni(2+).

Belongs to the acireductone dioxygenase (ARD) family. Monomer. It depends on Fe(2+) as a cofactor. Ni(2+) is required as a cofactor.

The enzyme catalyses 1,2-dihydroxy-5-(methylsulfanyl)pent-1-en-3-one + O2 = 3-(methylsulfanyl)propanoate + CO + formate + 2 H(+). It carries out the reaction 1,2-dihydroxy-5-(methylsulfanyl)pent-1-en-3-one + O2 = 4-methylsulfanyl-2-oxobutanoate + formate + 2 H(+). It functions in the pathway amino-acid biosynthesis; L-methionine biosynthesis via salvage pathway; L-methionine from S-methyl-5-thio-alpha-D-ribose 1-phosphate: step 5/6. In terms of biological role, catalyzes 2 different reactions between oxygen and the acireductone 1,2-dihydroxy-3-keto-5-methylthiopentene (DHK-MTPene) depending upon the metal bound in the active site. Fe-containing acireductone dioxygenase (Fe-ARD) produces formate and 2-keto-4-methylthiobutyrate (KMTB), the alpha-ketoacid precursor of methionine in the methionine recycle pathway. Ni-containing acireductone dioxygenase (Ni-ARD) produces methylthiopropionate, carbon monoxide and formate, and does not lie on the methionine recycle pathway. The sequence is that of Acireductone dioxygenase from Bacillus thuringiensis (strain Al Hakam).